The following is a 229-amino-acid chain: Enolase-phosphatase E1 (229 aa).

It belongs to the HAD-like hydrolase superfamily. MasA/MtnC family. In terms of assembly, monomer. It depends on Mg(2+) as a cofactor.

The enzyme catalyses 5-methylsulfanyl-2,3-dioxopentyl phosphate + H2O = 1,2-dihydroxy-5-(methylsulfanyl)pent-1-en-3-one + phosphate. It participates in amino-acid biosynthesis; L-methionine biosynthesis via salvage pathway; L-methionine from S-methyl-5-thio-alpha-D-ribose 1-phosphate: step 3/6. The protein operates within amino-acid biosynthesis; L-methionine biosynthesis via salvage pathway; L-methionine from S-methyl-5-thio-alpha-D-ribose 1-phosphate: step 4/6. Its function is as follows. Bifunctional enzyme that catalyzes the enolization of 2,3-diketo-5-methylthiopentyl-1-phosphate (DK-MTP-1-P) into the intermediate 2-hydroxy-3-keto-5-methylthiopentenyl-1-phosphate (HK-MTPenyl-1-P), which is then dephosphorylated to form the acireductone 1,2-dihydroxy-3-keto-5-methylthiopentene (DHK-MTPene). This is Enolase-phosphatase E1 from Pectobacterium carotovorum subsp. carotovorum (strain PC1).